The sequence spans 1036 residues: Hexagonally packed intermediate-layer surface protein (1036 aa).

Positions Met-1–Ala-17 are cleaved as a signal peptide. 3 cysteine pairs are disulfide-bonded: Cys-74–Cys-86, Cys-256–Cys-275, and Cys-642–Cys-754.

Post-translationally, glycosylated; contains six glycans. Acylated in the N-terminal region. In terms of processing, the N-terminus is blocked.

Its subcellular location is the secreted. The protein localises to the cell wall. It is found in the S-layer. In terms of biological role, shape maintenance, possible protection from noxious enzymes or exogenous and unsettling DNA, and may mediate homotypic cell-cell contacts. The chain is Hexagonally packed intermediate-layer surface protein (hpi) from Deinococcus radiodurans.